The primary structure comprises 285 residues: Elongation factor Ts (285 aa).

The involved in Mg(2+) ion dislocation from EF-Tu stretch occupies residues 75 to 78; the sequence is TDFV.

This sequence belongs to the EF-Ts family.

The protein localises to the cytoplasm. Associates with the EF-Tu.GDP complex and induces the exchange of GDP to GTP. It remains bound to the aminoacyl-tRNA.EF-Tu.GTP complex up to the GTP hydrolysis stage on the ribosome. The chain is Elongation factor Ts from Alcanivorax borkumensis (strain ATCC 700651 / DSM 11573 / NCIMB 13689 / SK2).